The following is a 225-amino-acid chain: uncharacterized protein (225 aa).

Residues 1–48 (MTQLVTRARSARGSTLGEQPRQDQLDFADHTGTAGDGNDGAAAASGPV) are disordered. Residues 20 to 29 (PRQDQLDFAD) are compositionally biased toward basic and acidic residues. One can recognise an HTH merR-type domain in the interval 64–136 (GYRGPSACQI…LHNIRVAVDH (73 aa)). A disordered region spans residues 201–225 (DGGESIAAPEDELASRRKHRDRKIG). Positions 216–225 (RRKHRDRKIG) are enriched in basic residues.

This is an uncharacterized protein from Mycobacterium tuberculosis (strain CDC 1551 / Oshkosh).